A 264-amino-acid polypeptide reads, in one-letter code: Small ribosomal subunit protein uS3 (264 aa).

One can recognise a KH type-2 domain in the interval 39–107 (VREYLKKKLK…PVHVNIEEIR (69 aa)). The segment at 214–264 (PVETAAPREEERRPRRAPRGDRPDGARNGRPGGGRGRAPRKADAAPAPEGE) is disordered. The span at 219 to 240 (APREEERRPRRAPRGDRPDGAR) shows a compositional bias: basic and acidic residues.

It belongs to the universal ribosomal protein uS3 family. In terms of assembly, part of the 30S ribosomal subunit. Forms a tight complex with proteins S10 and S14.

Functionally, binds the lower part of the 30S subunit head. Binds mRNA in the 70S ribosome, positioning it for translation. In Bordetella avium (strain 197N), this protein is Small ribosomal subunit protein uS3.